Consider the following 318-residue polypeptide: MTGMRIVFMGTPEFACPTLRTLIERGEKVVAVVTQPDRPKGRGQQTLPPPVKVVAEQHGIPVLQPVKVRLPESIEEIRGLNPDLIVVIAFGQILPKALLDIPKYGCINVHASLLPRYRGAAPLNWCIINGENETGVTTMMMDVGLDTGDMLLKRSTPIGADEDTQSLHDRMSQLGAELLAETLDRLARGELVPEKQDDALTCYAPMMKKEDGLIDWSRDAQAIKNQVRGMTPWPGAYSFLDDKLLKVFRVQTASGSGAPGEILSCGRDGIEVACGTGSLVIAELQLEGKKRLPAGDFLAGYKLQPGGLLGKKDASVGV.

A (6S)-5,6,7,8-tetrahydrofolate-binding site is contributed by 112–115; that stretch reads SLLP.

Belongs to the Fmt family.

The enzyme catalyses L-methionyl-tRNA(fMet) + (6R)-10-formyltetrahydrofolate = N-formyl-L-methionyl-tRNA(fMet) + (6S)-5,6,7,8-tetrahydrofolate + H(+). Attaches a formyl group to the free amino group of methionyl-tRNA(fMet). The formyl group appears to play a dual role in the initiator identity of N-formylmethionyl-tRNA by promoting its recognition by IF2 and preventing the misappropriation of this tRNA by the elongation apparatus. The protein is Methionyl-tRNA formyltransferase of Citrifermentans bemidjiense (strain ATCC BAA-1014 / DSM 16622 / JCM 12645 / Bem) (Geobacter bemidjiensis).